The following is a 222-amino-acid chain: Glutathione S-transferase A2 (222 aa).

A2 carries the post-translational modification N-acetylalanine. The region spanning 3–83 (GKPVLHYFNA…YIATKYDLYG (81 aa)) is the GST N-terminal domain. K4 carries the N6-succinyllysine modification. Glutathione-binding positions include Y9, K45, 54–55 (QV), and 67–68 (QT). The GST C-terminal domain occupies 85–208 (DMKERALIDM…HPGSQRKPPL (124 aa)).

The protein belongs to the GST superfamily. Alpha family. Homodimer. Heterodimer of GSTA1 and GSTA2. In terms of tissue distribution, expressed in the kidney.

The catalysed reaction is RX + glutathione = an S-substituted glutathione + a halide anion + H(+). Functionally, catalyzes the conjugation of glutathione to a large variety of electrophilic compounds. The chain is Glutathione S-transferase A2 (Gsta2) from Mus musculus (Mouse).